Reading from the N-terminus, the 378-residue chain is Glutamate 5-kinase (378 aa).

Lysine 14 is a binding site for ATP. The substrate site is built by serine 54, aspartate 141, and asparagine 153. Residue 173–174 (SD) participates in ATP binding. The PUA domain maps to 279 to 356 (AGRLTVDAGA…DEISAILGYD (78 aa)).

The protein belongs to the glutamate 5-kinase family.

Its subcellular location is the cytoplasm. It catalyses the reaction L-glutamate + ATP = L-glutamyl 5-phosphate + ADP. Its pathway is amino-acid biosynthesis; L-proline biosynthesis; L-glutamate 5-semialdehyde from L-glutamate: step 1/2. Its function is as follows. Catalyzes the transfer of a phosphate group to glutamate to form L-glutamate 5-phosphate. The protein is Glutamate 5-kinase of Brucella abortus (strain S19).